The chain runs to 64 residues: SPbeta prophage-derived uncharacterized protein YopV (64 aa).

This Bacillus subtilis (strain 168) protein is SPbeta prophage-derived uncharacterized protein YopV (yopV).